The chain runs to 227 residues: Response regulator protein TodT (227 aa).

In terms of domain architecture, Response regulatory spans 28 to 142; it reads VIYILDDDNA…ELLGAIRAAL (115 aa). Position 77 is a 4-aspartylphosphate (Asp-77). The HTH luxR-type domain occupies 158–223; sequence LKENYESLSK…DLVRVTERLK (66 aa). The H-T-H motif DNA-binding region spans 182 to 201; sequence NKQTALELDISEATVKVHRH.

Post-translationally, phosphorylated by TodS.

The protein localises to the cytoplasm. Functionally, member of the two-component regulatory system TodS/TodT involved in the regulation of toluene degradation. Phosphorylated TodT activates transcription of the tod operon (todXFC1C2BADEGIH). Binds specifically to a 6-bp palindromic DNA structure in the tod promoter region. The sequence is that of Response regulator protein TodT (todT) from Pseudomonas putida (strain ATCC 700007 / DSM 6899 / JCM 31910 / BCRC 17059 / LMG 24140 / F1).